A 114-amino-acid polypeptide reads, in one-letter code: Fumarate reductase subunit D (114 aa).

3 helical membrane-spanning segments follow: residues 27–47, 50–70, and 94–114; these read ICFP…LVPV, IVAF…TIFP, and WVFY…VIAL.

The protein belongs to the FrdD family. Part of an enzyme complex containing four subunits: a flavoprotein (FrdA), an iron-sulfur protein (FrdB), and two hydrophobic anchor proteins (FrdC and FrdD).

It localises to the cell inner membrane. Anchors the catalytic components of the fumarate reductase complex to the cell membrane, binds quinones. The protein is Fumarate reductase subunit D of Actinobacillus pleuropneumoniae serotype 3 (strain JL03).